Reading from the N-terminus, the 383-residue chain is AP-1-like transcription factor YAP6 (383 aa).

3 disordered regions span residues 1 to 64 (MQNP…ISVN), 83 to 113 (DYRS…SYNR), and 168 to 239 (TLPS…KAFR). A compositionally biased stretch (polar residues) spans 13 to 64 (NQGSSSMATYNASEKNLNEHPSPQIAQPSTSQKLPYRINPTTTNGDTDISVN). Over residues 88–101 (HQSPIHPSYIIPPH) the composition is skewed to low complexity. Over residues 168–184 (TLPSRNTSVTTAPPSFQ) the composition is skewed to polar residues. Over residues 185–206 (NSADTAKNSADNNDNNDNVTKP) the composition is skewed to low complexity. Residues 213 to 222 (QLISSSGKTL) show a composition bias toward polar residues. Residues 221–284 (TLRNTRRAAQ…NDNNILIAQH (64 aa)) form the bZIP domain. Positions 223–247 (RNTRRAAQNRTAQKAFRQRKEKYIK) are basic motif. The segment covering 227–237 (RAAQNRTAQKA) has biased composition (low complexity). The leucine-zipper stretch occupies residues 249–277 (LEQKSKIFDDLLAENNNFKSLNDSLRNDN).

Belongs to the bZIP family. YAP subfamily. As to quaternary structure, homodimer.

The protein localises to the nucleus. In terms of biological role, transcription activator involved in the regulation of genes expressed in response to environmental changes and metabolic requirements. According to genome-wide promoter binding and gene expression studies it regulates, among others, genes involved in ribosome biogenesis, protein synthesis, carbohydrate metabolism, and carbohydrate transport. It may also be involved in pleiotropic drug resistance. When overexpressed, it confers resistance to cisplatin, methylmethanosulfonate, and mitomycin C, and increases cellular tolerance to sodium and lithium. In Saccharomyces cerevisiae (strain ATCC 204508 / S288c) (Baker's yeast), this protein is AP-1-like transcription factor YAP6 (YAP6).